A 405-amino-acid chain; its full sequence is Protein lin-11 (405 aa).

Residues Lys17 and Lys18 each participate in a glycyl lysine isopeptide (Lys-Gly) (interchain with G-Cter in SUMO) cross-link. LIM zinc-binding domains follow at residues 68 to 124 and 127 to 187; these read CAAC…RRYS and CAGC…TATK. Positions 189-205 are enriched in polar residues; sequence STPTSIHRPVSNGSECN. 2 disordered regions span residues 189–208 and 224–246; these read STPT…NSDV and GEGD…GPRT. Residues 241 to 300 constitute a DNA-binding region (homeobox); it reads RRGPRTTIKAKQLETLKNAFAATPKPTRHIREQLAAETGLNMRVIQVWFQNRRSKERRMK.

As to expression, expressed in ADL, AVJL, AIZL, RICL, RIF and AVG neurons.

Its subcellular location is the nucleus. Its function is as follows. Probable transcription factor which is required for asymmetric division of vulval blast cells. Involved in olfactory plasticity probably by regulating the expression of transcription factor mbr-1 in RIF neurons. Plays a role in the chemorepulsive response toward ascaroside pheromones mediated by the ADL sensory neurons, probably by regulating E-box motif 5'-CANNTG-3' containing target genes in the ADL neurons. Plays a role in the differentiation of the ADL sensory neurons. This chain is Protein lin-11 (lin-11), found in Caenorhabditis elegans.